A 553-amino-acid chain; its full sequence is MEWLYSLFIEHSALQAVVVLSLISAIGLGLGKIHVCGISLGVTFVFFAGILAGHFGLSIDPQMLNYAESFGLIIFVYALGLQVGPGFFSSFRKGGVTLNMLAIAVVILGTFLAVVCSYTTGVSLPNMVGILCGATTNTPALGAAQQTLKQMGLESSTPALGCAVAYPLGVIGVILAVLLIRKLLVRREDLEVQEKDDANKTYIAAFQVHNPAIFNKSIKDIAHMSYPKFVISRLWRDGNVSIPTSEKIIKEGDRLLVVTSEKDALALTVLFGEQENTDWNKEDIDWNAIDSQLISQRIVVTRPELNGKKLGALRLRNHYGINISRVYRSGVQLLATPELTLQLGDRLTVVGEAAAIQNVEKVLGNAIKSLKEPNLVAVFVGIILGLALGAVPFSIPGISTPVRLGLAGGPIIVGILIGTFGPRLHMITYTTRSANLMLRALGLSLYLACLGLDAGAHFFDTVFRPEGLLWIGLGFGLTLVPTVLVGFFAFKIMKIDFGSVSGMLCGSMANPMALNYANDTIPGDNPSVAYATVYPLSMFLRVIIAQVLLMFLL.

A run of 5 helical transmembrane segments spans residues 13–30 (ALQA…GLGL), 37–59 (GISL…GLSI), 69–91 (SFGL…FSSF), 98–120 (LNML…SYTT), and 157–179 (TPAL…AVLL). RCK C-terminal domains are found at residues 190-273 (LEVQ…LFGE) and 281-365 (KEDI…VLGN). Helical transmembrane passes span 375 to 397 (LVAV…SIPG), 402 to 424 (VRLG…GPRL), 436 to 458 (LMLR…GAHF), 468 to 490 (LLWI…FFAF), 497 to 514 (FGSV…PMAL), and 529 to 551 (AYAT…LLMF).

The protein belongs to the AAE transporter (TC 2.A.81) family.

The protein resides in the cell membrane. This is an uncharacterized protein from Bacteroides fragilis (strain YCH46).